The sequence spans 110 residues: UPF0060 membrane protein Dtpsy_1668 (110 aa).

4 helical membrane-spanning segments follow: residues 7–27 (LALF…PWLW), 33–53 (SAWL…LLTL), 63–83 (AAYG…VDGV), and 86–106 (GPWD…IAFA).

It belongs to the UPF0060 family.

The protein resides in the cell inner membrane. This chain is UPF0060 membrane protein Dtpsy_1668, found in Acidovorax ebreus (strain TPSY) (Diaphorobacter sp. (strain TPSY)).